A 528-amino-acid polypeptide reads, in one-letter code: GMP synthase [glutamine-hydrolyzing] (528 aa).

The Glutamine amidotransferase type-1 domain maps to 13 to 204 (SIVILDFGSQ…VHNICRSKPD (192 aa)). Catalysis depends on Cys90, which acts as the Nucleophile. Catalysis depends on residues His178 and Glu180. Residues 205–403 (WTTNTFIDEA…LGLPEEIVNR (199 aa)) enclose the GMPS ATP-PPase domain. 232–238 (SGGVDSS) contributes to the ATP binding site.

In terms of assembly, homodimer.

The catalysed reaction is XMP + L-glutamine + ATP + H2O = GMP + L-glutamate + AMP + diphosphate + 2 H(+). The protein operates within purine metabolism; GMP biosynthesis; GMP from XMP (L-Gln route): step 1/1. In terms of biological role, catalyzes the synthesis of GMP from XMP. In Prochlorococcus marinus (strain SARG / CCMP1375 / SS120), this protein is GMP synthase [glutamine-hydrolyzing].